We begin with the raw amino-acid sequence, 222 residues long: 23kDa protein (222 aa).

A compositionally biased stretch (polar residues) spans 1 to 12 (MEPHDQSGSTTR). A disordered region spans residues 1–21 (MEPHDQSGSTTRQLDEIRDRR).

Its function is as follows. May act as a regulatory factor during viral transcription. This is 23kDa protein from Indian citrus ringspot virus (isolate Kinnow mandarin/India/K1/1996) (ICRSV).